Consider the following 246-residue polypeptide: Heavy metal-associated isoprenylated plant protein 8 (246 aa).

The interval 1–31 (MGKNKQNGESDNKSEKKNQKNGDSSVDKSDK) is disordered. One can recognise an HMA 1 domain in the interval 35–99 (CKEIVLKVYM…RVQKKFSRNA (65 aa)). The a metal cation site is built by Cys46 and Cys49. Residues 96–122 (SRNAEMISPKHNPKQDQKEPQQKKESA) are disordered. Residues 108-122 (PKQDQKEPQQKKESA) show a composition bias toward basic and acidic residues. In terms of domain architecture, HMA 2 spans 125–189 (IKTAILRMNM…IKKKLGKHAE (65 aa)). Residues Cys136 and Cys139 each contribute to the a metal cation site. Positions 191–226 (LSQITEKGKDNNKKNNNKKEESDGNKIFSYPPQYSS) are disordered. Basic and acidic residues predominate over residues 196–214 (EKGKDNNKKNNNKKEESDG). Residue Cys243 is modified to Cysteine methyl ester. Cys243 is lipidated: S-farnesyl cysteine. Positions 244-246 (SIM) are cleaved as a propeptide — removed in mature form.

The protein belongs to the HIPP family.

In terms of biological role, heavy-metal-binding protein. This chain is Heavy metal-associated isoprenylated plant protein 8, found in Arabidopsis thaliana (Mouse-ear cress).